The chain runs to 272 residues: Sulfate transporter CysZ (272 aa).

4 helical membrane-spanning segments follow: residues F29–I49, W66–F86, I148–L168, and F219–W239.

It belongs to the CysZ family.

It is found in the cell inner membrane. Functionally, high affinity, high specificity proton-dependent sulfate transporter, which mediates sulfate uptake. Provides the sulfur source for the cysteine synthesis pathway. This chain is Sulfate transporter CysZ, found in Haemophilus influenzae (strain 86-028NP).